Consider the following 331-residue polypeptide: Probable cytosolic iron-sulfur protein assembly protein Ciao1 (331 aa).

WD repeat units follow at residues 12–51 (GHKGRIWGVAWHPKGNSFASCGEDKAIRIWSQSGNTWTTK), 57–96 (GHKRTIREVRWSPCGEYLASASFDATTAIWSKHECNATLE), 97–136 (GHENEVKSVSWSQSGGLLATCSRDKSVWIWEVAGDDEFEC), 142–181 (AHTQDVKRVVWHPSKEILASASYDNTIKMYAESALDSDWD), 188–227 (SHTSTVWSIDFEADGERLVSCSDDTTLKIWRAYHPGNEAG), 246–285 (QHSRAVYDVSWCKLTGLIASACGDDGIRIFKESSDSKRDE), and 297–331 (AHEQDVNAVEWNPVTAGQLISCSDDGTIKIWKLQE).

It belongs to the WD repeat CIA1 family.

Functionally, essential component of the cytosolic iron-sulfur (Fe/S) protein assembly machinery. Required for the maturation of extramitochondrial Fe/S proteins. The protein is Probable cytosolic iron-sulfur protein assembly protein Ciao1 of Drosophila grimshawi (Hawaiian fruit fly).